A 320-amino-acid chain; its full sequence is Membrane protein insertase YidC 2 (320 aa).

Positions 1–23 (MKNLKKKLTLTGLMTAGLLFLSG) are cleaved as a signal peptide. A lipid anchor (N-palmitoyl cysteine) is attached at Cys-24. Residue Cys-24 is the site of S-diacylglycerol cysteine attachment. The next 5 membrane-spanning stretches (helical) occupy residues 68–88 (YGWG…PLGL), 142–162 (MLSS…IALY), 178–198 (GIPL…LYFI), 217–237 (AMLI…PAGV), and 239–259 (LYWA…TFIM). A disordered region spans residues 270–320 (EFTKNPPKINNEGLKDVTPTSVQENFKEITSERNEKERKSGGRNAGKQNRK). Basic and acidic residues predominate over residues 294-309 (NFKEITSERNEKERKS).

This sequence belongs to the OXA1/ALB3/YidC family. Type 2 subfamily.

It localises to the cell membrane. Functionally, required for the insertion and/or proper folding and/or complex formation of integral membrane proteins into the membrane. Involved in integration of membrane proteins that insert both dependently and independently of the Sec translocase complex, as well as at least some lipoproteins. This chain is Membrane protein insertase YidC 2, found in Lactococcus lactis subsp. lactis (strain IL1403) (Streptococcus lactis).